The chain runs to 232 residues: 7-cyano-7-deazaguanine synthase (232 aa).

8–18 lines the ATP pocket; the sequence is FSGGQDSTTCL. Residues Cys189, Cys198, Cys201, and Cys204 each contribute to the Zn(2+) site.

Belongs to the QueC family. Requires Zn(2+) as cofactor.

It catalyses the reaction 7-carboxy-7-deazaguanine + NH4(+) + ATP = 7-cyano-7-deazaguanine + ADP + phosphate + H2O + H(+). Its pathway is purine metabolism; 7-cyano-7-deazaguanine biosynthesis. Its function is as follows. Catalyzes the ATP-dependent conversion of 7-carboxy-7-deazaguanine (CDG) to 7-cyano-7-deazaguanine (preQ(0)). This is 7-cyano-7-deazaguanine synthase from Yersinia pseudotuberculosis serotype O:1b (strain IP 31758).